Here is a 286-residue protein sequence, read N- to C-terminus: B3 domain-containing protein REM20 (286 aa).

The TF-B3 DNA-binding region spans P9–W102. Residues S117–Q161 are disordered. The span at S119–I159 shows a compositional bias: acidic residues.

The protein resides in the nucleus. This chain is B3 domain-containing protein REM20 (REM20), found in Arabidopsis thaliana (Mouse-ear cress).